Consider the following 371-residue polypeptide: Terpene cyclase 6 (371 aa).

Residues Asp-144, Asn-266, Ser-270, and Glu-274 each contribute to the Mg(2+) site. The D(D/E)XX(D/E) motif motif lies at 144 to 148; sequence DDVME. An NSE motif motif is present at residues 266-274; it reads NDLYSYDKE. Residues 352–359 carry the WxxxxxRY motif motif; that stretch reads HHATLGRY. 2 residues coordinate (2E,6E)-farnesyl diphosphate: Arg-358 and Tyr-359.

It belongs to the terpene synthase family. As to quaternary structure, homodimer. Mg(2+) serves as cofactor.

The enzyme catalyses (2E,6E)-farnesyl diphosphate + H2O = (-)-alpha-acorenol + diphosphate. The protein operates within sesquiterpene biosynthesis. Terpene cyclase that catalyzes the cyclization of farnesyl diphosphate (FPP) to the spirocyclic sesquiterpene alpha-acorenol. The protein is Terpene cyclase 6 of Gibberella fujikuroi (strain CBS 195.34 / IMI 58289 / NRRL A-6831) (Bakanae and foot rot disease fungus).